A 233-amino-acid polypeptide reads, in one-letter code: MAEFNGIRAIVTDIEGTTSSISFVHEVLFPYAAKHMDAFIRENFSAPAVAEQLDEVARLGGVDRKSPDALIKQLLDWIAEDKKITPLKALQGMIWRSGYDEGAYKGHVYPEVAERLRHWRELGIRLFVYSSGSVAAQKQIFGFSEAGDLTPLFSGYFDTRVGGKRDADSYRAIVREVSEPASSVLFLSDVPAELSAAAEAELQVCQLVRGAGIERQETYPAVASFADLLIKPA.

The protein belongs to the HAD-like hydrolase superfamily. MasA/MtnC family. As to quaternary structure, monomer. Mg(2+) serves as cofactor.

The catalysed reaction is 5-methylsulfanyl-2,3-dioxopentyl phosphate + H2O = 1,2-dihydroxy-5-(methylsulfanyl)pent-1-en-3-one + phosphate. Its pathway is amino-acid biosynthesis; L-methionine biosynthesis via salvage pathway; L-methionine from S-methyl-5-thio-alpha-D-ribose 1-phosphate: step 3/6. It functions in the pathway amino-acid biosynthesis; L-methionine biosynthesis via salvage pathway; L-methionine from S-methyl-5-thio-alpha-D-ribose 1-phosphate: step 4/6. Its function is as follows. Bifunctional enzyme that catalyzes the enolization of 2,3-diketo-5-methylthiopentyl-1-phosphate (DK-MTP-1-P) into the intermediate 2-hydroxy-3-keto-5-methylthiopentenyl-1-phosphate (HK-MTPenyl-1-P), which is then dephosphorylated to form the acireductone 1,2-dihydroxy-3-keto-5-methylthiopentene (DHK-MTPene). In Hahella chejuensis (strain KCTC 2396), this protein is Enolase-phosphatase E1.